The sequence spans 209 residues: Putative amino acid efflux protein YcgF (209 aa).

Transmembrane regions (helical) follow at residues 1–21 (MNIFLSYIVLGLSLSAPVGPV), 39–59 (IFGLGAMTADGLYMLFIYFGL), 62–82 (FLTAPFVKTFLWLFGFFVLTY), 110–130 (FASGFLISLSNPLSILFWLGI), 147–167 (LLIYSSGIMIGILIWDFCMAI), and 184–204 (LTGIAGVSLLVFGFYFGYQGI).

Belongs to the Rht family.

The protein resides in the cell membrane. This Bacillus subtilis (strain 168) protein is Putative amino acid efflux protein YcgF (ycgF).